The sequence spans 517 residues: 2,3-bisphosphoglycerate-independent phosphoglycerate mutase (517 aa).

Mn(2+)-binding residues include Asp14 and Ser64. Ser64 serves as the catalytic Phosphoserine intermediate. Substrate contacts are provided by residues His125, Arg155–Asp156, Arg187, Arg193, Arg259–Arg262, and Lys334. Mn(2+)-binding residues include Asp401, His405, Asp442, His443, and His461.

The protein belongs to the BPG-independent phosphoglycerate mutase family. Monomer. Requires Mn(2+) as cofactor.

It catalyses the reaction (2R)-2-phosphoglycerate = (2R)-3-phosphoglycerate. Its pathway is carbohydrate degradation; glycolysis; pyruvate from D-glyceraldehyde 3-phosphate: step 3/5. Its function is as follows. Catalyzes the interconversion of 2-phosphoglycerate and 3-phosphoglycerate. The sequence is that of 2,3-bisphosphoglycerate-independent phosphoglycerate mutase from Symbiobacterium thermophilum (strain DSM 24528 / JCM 14929 / IAM 14863 / T).